Reading from the N-terminus, the 504-residue chain is Multicopper oxidase MmcO (504 aa).

Residues 1 to 44 (MPELATSGNAFDKRRFSRRGFLGAGIASGFALAACASKPTASGA) constitute a signal peptide (tat-type signal). Cu cation-binding residues include H120, H122, H161, and H163. Positions 190–349 (EWIIILDDWT…NALARALLST (160 aa)) constitute a Plastocyanin-like domain. Residues H437, H440, H442, H485, C486, H487, and H491 each contribute to the Cu cation site.

This sequence belongs to the multicopper oxidase family. It depends on Cu cation as a cofactor. Post-translationally, predicted to be exported by the Tat system. The position of the signal peptide cleavage has not been experimentally proven.

Its subcellular location is the cell inner membrane. The protein localises to the periplasm. The enzyme catalyses 4 Fe(2+) + O2 + 4 H(+) = 4 Fe(3+) + 2 H2O. Required for copper resistance. In vitro, oxidizes organic substrates and Fe(2+). May act in vivo by oxidation of toxic periplasmic Cu(+). The chain is Multicopper oxidase MmcO from Mycobacterium tuberculosis (strain ATCC 25618 / H37Rv).